A 396-amino-acid chain; its full sequence is N-acyl-phosphatidylethanolamine-hydrolyzing phospholipase D (396 aa).

Methionine 1 is modified (N-acetylmethionine). 2 stretches are compositionally biased toward polar residues: residues 1 to 12 and 26 to 37; these read MDENENSQSPAP and NSVQNSGGSESS. The segment at 1 to 41 is disordered; that stretch reads MDENENSQSPAPSHQYPKETLRKRQNSVQNSGGSESSRLSR. Histidine 185 and histidine 187 together coordinate Zn(2+). Position 188 (tyrosine 188) interacts with an N-acyl-1,2-diacyl-sn-glycero-3-phosphoethanolamine. Zn(2+) contacts are provided by aspartate 189, histidine 190, and histidine 253. Lysine 256 is a deoxycholate binding site. Aspartate 284 lines the Zn(2+) pocket. Histidine 321 contributes to the an N-acyl-1,2-diacyl-sn-glycero-3-phosphoethanolamine binding site. Zn(2+) is bound at residue histidine 343. Alanine 348 contributes to the deoxycholate binding site.

This sequence belongs to the NAPE-PLD family. As to quaternary structure, homodimer. Bile acids promote the assembly of inactive monomers into an active dimer and enable catalysis. Zn(2+) serves as cofactor. In terms of tissue distribution, widely expressed. Highest expression in brain, kidney and testis (at protein level). Expressed in adipose tissue (at protein level).

It localises to the golgi apparatus membrane. Its subcellular location is the early endosome membrane. The protein localises to the nucleus envelope. The protein resides in the nucleus. It is found in the nucleoplasm. The enzyme catalyses an N-acyl-1,2-diacyl-sn-glycero-3-phosphoethanolamine + H2O = an N-acylethanolamine + a 1,2-diacyl-sn-glycero-3-phosphate + H(+). It catalyses the reaction N-butanoyl-1-hexadecanoyl-2-(9Z,12Z-octadecadienoyl)-sn-glycero-3-phosphoethanolamine + H2O = N-butanoyl ethanolamine + 1-hexadecanoyl-2-(9Z,12Z-octadecadienoyl)-sn-glycero-3-phosphate + H(+). It carries out the reaction N-hexanoyl-1-hexadecanoyl-2-(9Z,12Z-octadecadienoyl)-sn-glycero-3-phosphoethanolamine + H2O = N-hexanoyl ethanolamine + 1-hexadecanoyl-2-(9Z,12Z-octadecadienoyl)-sn-glycero-3-phosphate + H(+). The catalysed reaction is N-octanoyl-1-hexadecanoyl-2-(9Z,12Z-octadecadienoyl)-sn-glycero-3-phosphoethanolamine + H2O = N-octanoyl ethanolamine + 1-hexadecanoyl-2-(9Z,12Z-octadecadienoyl)-sn-glycero-3-phosphate + H(+). The enzyme catalyses N-decanoyl-1-hexadecanoyl-2-(9Z,12Z-octadecadienoyl)-sn-glycero-3-phosphoethanolamine + H2O = N-decanoyl ethanolamine + 1-hexadecanoyl-2-(9Z,12Z-octadecadienoyl)-sn-glycero-3-phosphate + H(+). It catalyses the reaction N-dodecanoyl-1,2-di-(9Z-octadecenoyl)-sn-glycero-3-phosphoethanolamine + H2O = N-dodecanoylethanolamine + 1,2-di-(9Z-octadecenoyl)-sn-glycero-3-phosphate + H(+). It carries out the reaction N-tetradecanoyl-1,2-di-(9Z-octadecenoyl)-sn-glycero-3-phosphoethanolamine + H2O = N-tetradecanoylethanolamine + 1,2-di-(9Z-octadecenoyl)-sn-glycero-3-phosphate + H(+). The catalysed reaction is N-hexadecanoyl-1,2-di-(9Z-octadecenoyl)-sn-glycero-3-phosphoethanolamine + H2O = N-hexadecanoylethanolamine + 1,2-di-(9Z-octadecenoyl)-sn-glycero-3-phosphate + H(+). The enzyme catalyses N,1-dihexadecanoyl-2-(9Z,12Z-octadecadienoyl)-sn-glycero-3-phosphoethanolamine + H2O = 1-hexadecanoyl-2-(9Z,12Z-octadecadienoyl)-sn-glycero-3-phosphate + N-hexadecanoylethanolamine + H(+). It catalyses the reaction N-octadecanoyl-1,2-di-(9Z-octadecenoyl)-sn-glycero-3-phosphoethanolamine + H2O = N-octadecanoyl ethanolamine + 1,2-di-(9Z-octadecenoyl)-sn-glycero-3-phosphate + H(+). It carries out the reaction N,1,2-tri-(9Z-octadecenoyl)-sn-glycero-3-phosphoethanolamine + H2O = N-(9Z-octadecenoyl) ethanolamine + 1,2-di-(9Z-octadecenoyl)-sn-glycero-3-phosphate + H(+). The catalysed reaction is N-(5Z,8Z,11Z,14Z-eicosatetraenoyl)-1,2-diacyl-sn-glycero-3-phosphoethanolamine + H2O = N-(5Z,8Z,11Z,14Z-eicosatetraenoyl)-ethanolamine + a 1,2-diacyl-sn-glycero-3-phosphate + H(+). The enzyme catalyses N-(5Z,8Z,11Z,14Z-eicosatetraenoyl)-1,2-di-(9Z-octadecenoyl)-sn-glycero-3-phosphoethanolamine + H2O = N-(5Z,8Z,11Z,14Z-eicosatetraenoyl)-ethanolamine + 1,2-di-(9Z-octadecenoyl)-sn-glycero-3-phosphate + H(+). It catalyses the reaction 1-O-(1Z-octadecenoyl)-2-(9Z-octadecenoyl)-sn-glycero-3-phospho-N-hexadecanoyl-ethanolamine + H2O = 1-O-(1Z-octadecenoyl)-2-(9Z-octadecenoyl)-sn-glycero-3-phosphate + N-hexadecanoylethanolamine + H(+). It carries out the reaction N,1-diacyl-sn-glycero-3-phosphoethanolamine + H2O = an N-acylethanolamine + a 1-acyl-sn-glycero-3-phosphate + H(+). The catalysed reaction is N,1-dihexadecanoyl-sn-glycero-3-phosphoethanolamine + H2O = N-hexadecanoylethanolamine + 1-hexadecanoyl-sn-glycero-3-phosphate + H(+). The enzyme catalyses N-(5Z,8Z,11Z,14Z-eicosatetraenoyl)-1-(9Z-octadecenoyl)-sn-glycero-3-phosphoethanolamine + H2O = N-(5Z,8Z,11Z,14Z-eicosatetraenoyl)-ethanolamine + 1-(9Z-octadecenoyl)-sn-glycero-3-phosphate + H(+). Activated by divalent cations. Activated by bile acids. Activated by membrane phospholipids such as phosphatidylethanolamines. Inhibited by cardiolipins. D-type phospholipase that hydrolyzes N-acyl-phosphatidylethanolamines (NAPEs) to produce bioactive N-acylethanolamines/fatty acid ethanolamides (NAEs/FAEs) and phosphatidic acid. Cleaves the terminal phosphodiester bond of diacyl- and alkenylacyl-NAPEs, primarily playing a role in the generation of long-chain saturated and monounsaturated NAEs in the brain. May control NAPE homeostasis in dopaminergic neuron membranes and regulate neuron survival, partly through RAC1 activation. As a regulator of lipid metabolism in the adipose tissue, mediates the crosstalk between adipocytes, gut microbiota and immune cells to control body temperature and weight. In particular, regulates energy homeostasis by promoting cold-induced brown or beige adipocyte differentiation program to generate heat from fatty acids and glucose. Has limited D-type phospholipase activity toward N-acyl lyso-NAPEs. The polypeptide is N-acyl-phosphatidylethanolamine-hydrolyzing phospholipase D (Napepld) (Rattus norvegicus (Rat)).